Here is a 531-residue protein sequence, read N- to C-terminus: Peptide chain release factor 3 (531 aa).

Residues 10-278 (ARRRTFAIIS…DFVEHAPGPL (269 aa)) enclose the tr-type G domain. GTP is bound by residues 19–26 (SHPDAGKT), 87–91 (DTPGH), and 141–144 (NKLD).

The protein belongs to the TRAFAC class translation factor GTPase superfamily. Classic translation factor GTPase family. PrfC subfamily.

The protein localises to the cytoplasm. Increases the formation of ribosomal termination complexes and stimulates activities of RF-1 and RF-2. It binds guanine nucleotides and has strong preference for UGA stop codons. It may interact directly with the ribosome. The stimulation of RF-1 and RF-2 is significantly reduced by GTP and GDP, but not by GMP. The chain is Peptide chain release factor 3 from Thioalkalivibrio sulfidiphilus (strain HL-EbGR7).